A 339-amino-acid chain; its full sequence is NADH-quinone oxidoreductase subunit H (339 aa).

9 consecutive transmembrane segments (helical) span residues Ile9–Cys29, Pro50–Phe70, Ile82–Ile102, Val115–Gly135, Met161–Val181, Met187–Leu207, Met235–Thr255, Ile275–Ile295, and Gly311–Ile331.

The protein belongs to the complex I subunit 1 family. In terms of assembly, NDH-1 is composed of 14 different subunits. Subunits NuoA, H, J, K, L, M, N constitute the membrane sector of the complex.

It is found in the cell inner membrane. The enzyme catalyses a quinone + NADH + 5 H(+)(in) = a quinol + NAD(+) + 4 H(+)(out). Its function is as follows. NDH-1 shuttles electrons from NADH, via FMN and iron-sulfur (Fe-S) centers, to quinones in the respiratory chain. The immediate electron acceptor for the enzyme in this species is believed to be ubiquinone. Couples the redox reaction to proton translocation (for every two electrons transferred, four hydrogen ions are translocated across the cytoplasmic membrane), and thus conserves the redox energy in a proton gradient. This subunit may bind ubiquinone. This chain is NADH-quinone oxidoreductase subunit H, found in Rickettsia bellii (strain RML369-C).